Here is a 132-residue protein sequence, read N- to C-terminus: Small ribosomal subunit protein uS8 (132 aa).

Belongs to the universal ribosomal protein uS8 family. As to quaternary structure, part of the 30S ribosomal subunit. Contacts proteins S5 and S12.

In terms of biological role, one of the primary rRNA binding proteins, it binds directly to 16S rRNA central domain where it helps coordinate assembly of the platform of the 30S subunit. The chain is Small ribosomal subunit protein uS8 from Ligilactobacillus salivarius (strain UCC118) (Lactobacillus salivarius).